The chain runs to 206 residues: Somatotropin (206 aa).

The signal sequence occupies residues 1-22 (MAGLHFFPALLALLMASLQTHQ). Intrachain disulfides connect C75–C179 and C196–C204.

The protein belongs to the somatotropin/prolactin family.

The protein localises to the secreted. Growth hormone plays an important role in growth control and is involved in the regulation of several anabolic processes. Implicated as an osmoregulatory substance important for seawater adaptation. This is Somatotropin (gh) from Protopterus annectens (African lungfish).